A 338-amino-acid chain; its full sequence is NLP effector protein 6 (338 aa).

The first 19 residues, 1-19 (MRFTTIFWISLTVLATVRA), serve as a signal peptide directing secretion. The disordered stretch occupies residues 68–119 (LTLSPSASSPAKRNVTLPPDTTMRPDPRQTEPPTEAPTPASTPAPTPDPGPW). N81 carries N-linked (GlcNAc...) asparagine glycosylation. A compositionally biased stretch (pro residues) spans 101 to 117 (TEAPTPASTPAPTPDPG). Positions 205–215 (AIMYSWYFPKD) match the Conserved undecapeptide motif I motif. Residues 222-227 (GHRHDW) carry the Hepta-peptide GHRHDWE motif II motif.

It belongs to the Necrosis inducing protein (NPP1) family.

The protein resides in the secreted. Its function is as follows. Secreted effector that contributes strongly to virulence during infection by P.capsici. Causes large necrotic areas in both host C.annuum and non-host N.benthamiana. This is NLP effector protein 6 from Phytophthora capsici.